The following is a 528-amino-acid chain: Chaperonin GroEL, chloroplastic (528 aa).

ATP is bound by residues Thr29–Pro32, Asp86–Thr90, Gly415, Asn481–Ala483, and Asp497.

This sequence belongs to the chaperonin (HSP60) family. Forms a cylinder of 14 subunits composed of two heptameric rings stacked back-to-back. Interacts with the co-chaperonin GroES.

It is found in the plastid. The protein localises to the chloroplast. The enzyme catalyses ATP + H2O + a folded polypeptide = ADP + phosphate + an unfolded polypeptide.. In terms of biological role, together with its co-chaperonin GroES, plays an essential role in assisting protein folding. The GroEL-GroES system forms a nano-cage that allows encapsulation of the non-native substrate proteins and provides a physical environment optimized to promote and accelerate protein folding. This chain is Chaperonin GroEL, chloroplastic, found in Trieres chinensis (Marine centric diatom).